The following is an 85-amino-acid chain: Large ribosomal subunit protein bL27 (85 aa).

The tract at residues 1–25 (MAHKKAGGSSRNGRDSHSKRLGVKH) is disordered.

The protein belongs to the bacterial ribosomal protein bL27 family.

This is Large ribosomal subunit protein bL27 from Buchnera aphidicola subsp. Baizongia pistaciae (strain Bp).